A 152-amino-acid chain; its full sequence is MTTQIELKILDARIGTEYPLPAYATPGSAGMDLRALLDAPITLAPGDTILVPTGLAIHIQDPGLCATILPRSGLGHKHGIVLGNLVGLIDSDYQGQLMVSVWNRGNDSFTMQPGERIAQLVIMPVVQASFQLVDEFNQSERGEGGFGSSGRQ.

Residues 71 to 73 (RSG), Asn-84, 88 to 90 (LID), and Met-98 each bind substrate.

It belongs to the dUTPase family. Mg(2+) is required as a cofactor.

The enzyme catalyses dUTP + H2O = dUMP + diphosphate + H(+). It participates in pyrimidine metabolism; dUMP biosynthesis; dUMP from dCTP (dUTP route): step 2/2. Functionally, this enzyme is involved in nucleotide metabolism: it produces dUMP, the immediate precursor of thymidine nucleotides and it decreases the intracellular concentration of dUTP so that uracil cannot be incorporated into DNA. This is Deoxyuridine 5'-triphosphate nucleotidohydrolase from Aeromonas salmonicida (strain A449).